The primary structure comprises 101 residues: Small ribosomal subunit protein uS14 (101 aa).

It belongs to the universal ribosomal protein uS14 family. As to quaternary structure, part of the 30S ribosomal subunit. Contacts proteins S3 and S10.

Its function is as follows. Binds 16S rRNA, required for the assembly of 30S particles and may also be responsible for determining the conformation of the 16S rRNA at the A site. The protein is Small ribosomal subunit protein uS14 of Maricaulis maris (strain MCS10) (Caulobacter maris).